The chain runs to 368 residues: Trans-enoyl reductase TwmE (368 aa).

49–52 (SDYK) lines the NADP(+) pocket. Position 135–142 (135–142 (FKAATLGT)) interacts with substrate. NADP(+) is bound by residues 204 to 207 (SPRS), tyrosine 222, and 269 to 270 (LE). Residue 290 to 294 (SAELY) coordinates substrate. 360–361 (HP) serves as a coordination point for NADP(+).

This sequence belongs to the zinc-containing alcohol dehydrogenase family. As to quaternary structure, monomer.

It functions in the pathway secondary metabolite biosynthesis. Its function is as follows. Trans-enoyl reductase; part of the gene cluster that mediates the biosynthesis of wortmanamides A and B, reduced long-chain polyketides amidated with a specific omega-amino acid, 5-aminopentanoic acid (5PA). The PKS modules of TwmB are involved in the synthesis of the polyketide backbone, whereas the non-canonical C domain of TwmB is a bonafide condensation domain that specifically selects 5PA and catalyzes amidation to release polyketide chain. The C domain clearly prefers C16 and C18 fatty acyl substrates, which is consistent with simultaneous formation of both octaketide and nonaketide acyl amides wortmanamides A and B. Because TwmB lacks a designated enoylreductase (ER) domain, the required activity is provided the enoyl reductase TwmE. The roles of the remaining enzymes have still to be clarified. The chain is Trans-enoyl reductase TwmE from Talaromyces wortmannii (Penicillium wortmannii).